The following is a 267-amino-acid chain: Nanos homolog 1 (267 aa).

The segment at 40–56 is essential for its translational repressor activity; sequence FSSWNDYLGLATLITRA. Residues 57–94 form a disordered region; it reads SDRGSPHEGPGPTAAGPTMGPPEDDEDDDGEEPEAGGR. Acidic residues predominate over residues 78–90; the sequence is PEDDEDDDGEEPE. The Nanos-type zinc finger occupies 188 to 242; it reads VCVFCRNNKEAVALYTTHILKGPDGRVLCPVLRRYTCPLCGASGDNAHTIKYCPL. Zn(2+)-binding residues include Cys189, Cys192, His205, Cys216, Cys224, Cys227, His235, and Cys240. 2 short sequence motifs (C2HC) span residues 189–216 and 224–240; these read CVFC…RVLC and CPLC…IKYC. A disordered region spans residues 243-267; the sequence is SKVPPPTVRPPPRSNRDSLPSKKLR. Pro residues predominate over residues 244-255; sequence KVPPPTVRPPPR. The segment covering 256–267 has biased composition (basic and acidic residues); the sequence is SNRDSLPSKKLR.

The protein belongs to the nanos family. As to quaternary structure, interacts with PUM2, SNAPIN and CTNNB1. Interacts (via N-terminal region) with CTNND1. Interacts with DDX20 (via N-terminal region). Expressed in the oocyte. Transiently expressed in eight-cell embryos. At 12.5 dpc, it is re-expressed in the central nervous system and the expression continues in the adult brain, in which the hippocampal formation is the predominant region. Expressed in the seminiferous tubules of mature testis, but not in the primordial germ cells.

The protein resides in the cytoplasm. The protein localises to the perinuclear region. May act as a translational repressor which regulates translation of specific mRNAs by forming a complex with PUM2 that associates with the 3'-UTR of mRNA targets. Capable of interfering with the proadhesive and anti-invasive functions of E-cadherin. Up-regulates the production of MMP14 to promote tumor cell invasion. Not essential for normal development. The sequence is that of Nanos homolog 1 (Nanos1) from Mus musculus (Mouse).